A 460-amino-acid polypeptide reads, in one-letter code: tRNA modification GTPase MnmE (460 aa).

3 residues coordinate (6S)-5-formyl-5,6,7,8-tetrahydrofolate: R29, E86, and K126. The TrmE-type G domain occupies 222-383 (GMRVVIAGRP…LAEHLKECMG (162 aa)). Residue N232 coordinates K(+). Residues 232–237 (NAGKSS), 251–257 (TAIAGTT), 276–279 (DTAG), and 341–344 (NKAD) contribute to the GTP site. S236 serves as a coordination point for Mg(2+). The K(+) site is built by T251, I253, and T256. Position 257 (T257) interacts with Mg(2+). K460 is a binding site for (6S)-5-formyl-5,6,7,8-tetrahydrofolate.

It belongs to the TRAFAC class TrmE-Era-EngA-EngB-Septin-like GTPase superfamily. TrmE GTPase family. As to quaternary structure, homodimer. Heterotetramer of two MnmE and two MnmG subunits. The cofactor is K(+).

It localises to the cytoplasm. Functionally, exhibits a very high intrinsic GTPase hydrolysis rate. Involved in the addition of a carboxymethylaminomethyl (cmnm) group at the wobble position (U34) of certain tRNAs, forming tRNA-cmnm(5)s(2)U34. The polypeptide is tRNA modification GTPase MnmE (Pseudoalteromonas atlantica (strain T6c / ATCC BAA-1087)).